The primary structure comprises 593 residues: MAQISESVSPSTDLKSTESSITSNRHGNMWEDDRIQSLNSPYGAPAYQERSEKLIEEIKLLFLSDMDDSCNDSDRDLIKRLEIVDTVECLGIDRHFQPEIKLALDYVYRCWNERGIGEGSRDSLKKDLNATALGFRALRLHRYNVSSGVLENFRDDNGQFFCGSTVEEEGAEAYNKHVRCMLSLSRASNILFPGEKVMEEAKAFTTNYLKKVLAGREATHVDESLLGEVKYALEFPWHCSVQRWEARSFIEIFGQIDSELKSNLSKKMLELAKLDFNILQCTHQKELQIISRWFADSSIASLNFYRKCYVEFYFWMAAAISEPEFSGSRVAFTKIAILMTMLDDLYDTHGTLDQLKIFTEGVRRWDVSLVEGLPDFMKIAFEFWLKTSNELIAEAVKAQGQDMAAYIRKNAWERYLEAYLQDAEWIATGHVPTFDEYLNNGTPNTGMCVLNLIPLLLMGEHLPIDILEQIFLPSRFHHLIELASRLVDDARDFQAEKDHGDLSCIECYLKDHPESTVEDALNHVNGLLGNCLLEMNWKFLKKQDSVPLSCKKYSFHVLARSIQFMYNQGDGFSISNKVIKDQVQKVLIVPVPI.

Polar residues predominate over residues 1–26 (MAQISESVSPSTDLKSTESSITSNRH). Residues 1–34 (MAQISESVSPSTDLKSTESSITSNRHGNMWEDDR) form a disordered region. Positions 343, 347, 488, and 496 each coordinate Mg(2+). The short motif at 343–347 (DDLYD) is the DDXXD motif element.

The protein belongs to the terpene synthase family. Tpsd subfamily. It depends on Mg(2+) as a cofactor. K(+) serves as cofactor.

The protein resides in the cytoplasm. The enzyme catalyses (2E,6E)-farnesyl diphosphate = gamma-humulene + diphosphate. It carries out the reaction (2E,6E)-farnesyl diphosphate = sibirene + diphosphate. The catalysed reaction is (2E,6E)-farnesyl diphosphate = longifolene + diphosphate. It catalyses the reaction (2E,6E)-farnesyl diphosphate = beta-himachalene + diphosphate. The enzyme catalyses (2E,6E)-farnesyl diphosphate = gamma-himachalene + diphosphate. It carries out the reaction (2E,6E)-farnesyl diphosphate = alpha-himachalene + diphosphate. It participates in terpene metabolism; oleoresin biosynthesis. Functionally, involved in defensive oleoresin formation in conifers in response to insect attack or other injury. Involved in 52 sesquiterpene (C15) olefins biosynthesis. This chain is Gamma-humulene synthase (ag5), found in Abies grandis (Grand fir).